A 383-amino-acid polypeptide reads, in one-letter code: MDPTQISHLALDIGGTLIKLVYFSANGDYSEESRNGCSVVKGRLCFAKFETRKIDDCLEFIRFNILHHSGVQQPNGEGHDKLYVKATGGGAFKFADLFKEKLGILFDKEDEMCSLVGGVNFLLKTVPREAFTYLDGQKKFVEIDHNDLYPYLLVNIGSGVSMIKVDGDGKYERISGTSLGGGTFLGLGKLLTKCKSFDELLELSHHGNNRVIDMLVGDIYGGTDYSKIGLSSTAIASSFGKAISDGKELEDYQPEDVARSLLRMISNNIGQIAYLNALRFGLKRIFFGGFFIRGLEYTMDTISVAVHFWSRGEAKAMFLRHEGFLGALGAFTSYNDQSHNDLKPHHHTVQRAILNCSGHNFRHIPVTSNLNESETIECSINLV.

This sequence belongs to the type II pantothenate kinase family. Highly expressed in leaves and developing seeds. Expressed in roots, stems and flowers.

It carries out the reaction (R)-pantothenate + ATP = (R)-4'-phosphopantothenate + ADP + H(+). It functions in the pathway cofactor biosynthesis; coenzyme A biosynthesis; CoA from (R)-pantothenate: step 1/5. Regulated by feedback inhibition by malonyl-CoA. Catalyzes the phosphorylation of pantothenate the first step in CoA biosynthesis. May play a role in the physiological regulation of the intracellular CoA concentration. Functionally redudant with PANK2. In Arabidopsis thaliana (Mouse-ear cress), this protein is Pantothenate kinase 1 (PANK1).